The chain runs to 147 residues: Fluoride-specific ion channel FluC 1 (147 aa).

Helical transmembrane passes span 29-49, 61-81, 90-110, and 118-138; these read YVYI…ISFL, IANL…IAFF, AITT…LELI, and FITL…LCYV. Na(+)-binding residues include glycine 97 and threonine 100.

Belongs to the fluoride channel Fluc/FEX (TC 1.A.43) family.

The protein localises to the cell membrane. It catalyses the reaction fluoride(in) = fluoride(out). With respect to regulation, na(+) is not transported, but it plays an essential structural role and its presence is essential for fluoride channel function. Fluoride-specific ion channel. Important for reducing fluoride concentration in the cell, thus reducing its toxicity. The polypeptide is Fluoride-specific ion channel FluC 1 (Staphylococcus aureus (strain MRSA252)).